A 281-amino-acid polypeptide reads, in one-letter code: Very long chain fatty acid elongase 7 (281 aa).

Ala-2 bears the N-acetylalanine mark. The Lumenal portion of the chain corresponds to Ala-2–Asn-27. Residues Trp-28–Val-48 traverse the membrane as a helical segment. Topologically, residues Thr-49–Asn-72 are cytoplasmic. The chain crosses the membrane as a helical span at residues Phe-73–Thr-93. The Lumenal segment spans residues Gly-94 to His-115. Cys-99 and Cys-231 are oxidised to a cystine. Residues Thr-116–Leu-136 form a helical membrane-spanning segment. 3-oxoeicosanoyl-CoA is bound by residues Lys-124, Arg-137, Lys-139, Gln-142, and His-147. The Cytoplasmic segment spans residues Arg-137–Gln-142. Residues Val-143–Val-162 form a helical membrane-spanning segment. A HxxHH motif motif is present at residues His-147–His-151. Catalysis depends on His-150, which acts as the Nucleophile. At Lys-163 to Leu-176 the chain is on the lumenal side. Residues Asn-177–Tyr-197 traverse the membrane as a helical segment. The 3-oxoeicosanoyl-CoA site is built by Tyr-187, Lys-204, Thr-208, and Gln-211. The Cytoplasmic segment spans residues Gln-198 to His-206. A helical transmembrane segment spans residues Leu-207–Phe-227. At Met-228–Pro-236 the chain is on the lumenal side. The helical transmembrane segment at Val-237 to Trp-257 threads the bilayer. At Tyr-258 to His-281 the chain is on the cytoplasmic side. Arg-266 is a 3-oxoeicosanoyl-CoA binding site. Positions Lys-277 to His-281 match the Di-lysine motif motif.

The protein belongs to the ELO family. ELOVL7 subfamily. Homodimer. Interacts with TECR.

It localises to the endoplasmic reticulum membrane. The catalysed reaction is a very-long-chain acyl-CoA + malonyl-CoA + H(+) = a very-long-chain 3-oxoacyl-CoA + CO2 + CoA. It carries out the reaction eicosanoyl-CoA + malonyl-CoA + H(+) = 3-oxodocosanoyl-CoA + CO2 + CoA. The enzyme catalyses (5Z,8Z,11Z,14Z)-eicosatetraenoyl-CoA + malonyl-CoA + H(+) = (7Z,10Z,13Z,16Z)-3-oxodocosatetraenoyl-CoA + CO2 + CoA. It catalyses the reaction (6Z,9Z,12Z)-octadecatrienoyl-CoA + malonyl-CoA + H(+) = (8Z,11Z,14Z)-3-oxoeicosatrienoyl-CoA + CO2 + CoA. The catalysed reaction is (9Z,12Z)-octadecadienoyl-CoA + malonyl-CoA + H(+) = (11Z,14Z)-3-oxoicosa-11,14-dienoyl-CoA + CO2 + CoA. It carries out the reaction (9Z)-octadecenoyl-CoA + malonyl-CoA + H(+) = 3-oxo-(11Z)-eicosenoyl-CoA + CO2 + CoA. The enzyme catalyses octadecanoyl-CoA + malonyl-CoA + H(+) = 3-oxoeicosanoyl-CoA + CO2 + CoA. It catalyses the reaction hexadecanoyl-CoA + malonyl-CoA + H(+) = 3-oxooctadecanoyl-CoA + CO2 + CoA. The catalysed reaction is (9Z,12Z,15Z)-octadecatrienoyl-CoA + malonyl-CoA + H(+) = (11Z,14Z,17Z)-3-oxoeicosatrienoyl-CoA + CO2 + CoA. The protein operates within lipid metabolism; fatty acid biosynthesis. Catalyzes the first and rate-limiting reaction of the four reactions that constitute the long-chain fatty acids elongation cycle. This endoplasmic reticulum-bound enzymatic process allows the addition of 2 carbons to the chain of long- and very long-chain fatty acids (VLCFAs) per cycle. Condensing enzyme with higher activity toward C18 acyl-CoAs, especially C18:3(n-3) acyl-CoAs and C18:3(n-6)-CoAs. Also active toward C20:4-, C18:0-, C18:1-, C18:2- and C16:0-CoAs, and weakly toward C20:0-CoA. Little or no activity toward C22:0-, C24:0-, or C26:0-CoAs. May participate in the production of saturated and polyunsaturated VLCFAs of different chain lengths that are involved in multiple biological processes as precursors of membrane lipids and lipid mediators. This chain is Very long chain fatty acid elongase 7, found in Rattus norvegicus (Rat).